Here is a 722-residue protein sequence, read N- to C-terminus: Pentatricopeptide repeat-containing protein At4g14820 (722 aa).

PPR repeat units lie at residues 75-109 (ESIV…GGRL), 110-140 (DQFS…AFKI), 145-175 (DPFV…MSHR), 176-210 (DVVT…NVMP), 211-245 (DEMI…DVRM), 246-276 (DTHL…MSVR), 277-307 (NLFV…TEKK), 308-342 (DLVC…GIKP), 343-377 (DVVS…GLES), 378-408 (ELSI…MPRR), 409-443 (NVVS…NVEP), 444-479 (NEVT…NITP), and 480-514 (KLEH…SNVV). The type E motif stretch occupies residues 515-590 (IWGSLMSACR…EKGLSRIDQN (76 aa)). The tract at residues 591–621 (GKSHEFLIGDKRHKQSNEIYAKLDEVVSKLK) is type E(+) motif. Residues 622-722 (LAGYVPDCGS…NGLCSCRDYW (101 aa)) form a type DYW motif region.

It belongs to the PPR family. PCMP-H subfamily.

This chain is Pentatricopeptide repeat-containing protein At4g14820 (PCMP-H3), found in Arabidopsis thaliana (Mouse-ear cress).